A 142-amino-acid chain; its full sequence is UPF0305 protein MK0666 (142 aa).

Belongs to the UPF0305 family.

The sequence is that of UPF0305 protein MK0666 from Methanopyrus kandleri (strain AV19 / DSM 6324 / JCM 9639 / NBRC 100938).